The chain runs to 200 residues: Small ribosomal subunit protein uS4 (200 aa).

Residues 21–42 (GTGKELQKRPYPPGQHGPGQRR) are disordered. Residues 92–155 (SRLDNLVYRL…RNLQVIKEAI (64 aa)) enclose the S4 RNA-binding domain.

Belongs to the universal ribosomal protein uS4 family. Part of the 30S ribosomal subunit. Contacts protein S5. The interaction surface between S4 and S5 is involved in control of translational fidelity.

Functionally, one of the primary rRNA binding proteins, it binds directly to 16S rRNA where it nucleates assembly of the body of the 30S subunit. In terms of biological role, with S5 and S12 plays an important role in translational accuracy. This Geobacillus thermodenitrificans (strain NG80-2) protein is Small ribosomal subunit protein uS4.